The chain runs to 249 residues: Esterase YjfP (249 aa).

Its function is as follows. Displays esterase activity toward palmitoyl-CoA and pNP-butyrate. The protein is Esterase YjfP (yjfP) of Escherichia coli (strain K12).